Consider the following 472-residue polypeptide: Uronate isomerase (472 aa).

Belongs to the metallo-dependent hydrolases superfamily. Uronate isomerase family.

The enzyme catalyses D-glucuronate = D-fructuronate. It carries out the reaction aldehydo-D-galacturonate = keto-D-tagaturonate. The protein operates within carbohydrate metabolism; pentose and glucuronate interconversion. The protein is Uronate isomerase of Xanthomonas axonopodis pv. citri (strain 306).